The primary structure comprises 423 residues: Histidine--tRNA ligase (423 aa).

This sequence belongs to the class-II aminoacyl-tRNA synthetase family. As to quaternary structure, homodimer.

The protein resides in the cytoplasm. It catalyses the reaction tRNA(His) + L-histidine + ATP = L-histidyl-tRNA(His) + AMP + diphosphate + H(+). This Rhodococcus jostii (strain RHA1) protein is Histidine--tRNA ligase.